Reading from the N-terminus, the 363-residue chain is Peptide chain release factor 1 (363 aa).

Gln-237 bears the N5-methylglutamine mark. Basic and acidic residues predominate over residues 286–296; the sequence is EKRRSAEESTR. The segment at 286-305 is disordered; it reads EKRRSAEESTRRSLVASGDR.

It belongs to the prokaryotic/mitochondrial release factor family. In terms of processing, methylated by PrmC. Methylation increases the termination efficiency of RF1.

It localises to the cytoplasm. Its function is as follows. Peptide chain release factor 1 directs the termination of translation in response to the peptide chain termination codons UAG and UAA. The chain is Peptide chain release factor 1 from Shewanella baltica (strain OS155 / ATCC BAA-1091).